The chain runs to 537 residues: 5,6-dihydroxyindole-2-carboxylic acid oxidase (537 aa).

The signal sequence occupies residues 1–24; that stretch reads MKSPTLLSLGYMFLVLLFFQQAWA. The Lumenal, melanosome segment spans residues 25–477; sequence QFPRECATIE…WPSRSFSISE (453 aa). Cystine bridges form between C30-C41, C42-C65, C56-C99, C101-C110, and C113-C122. N-linked (GlcNAc...) asparagine glycosylation is found at N96 and N104. The N-linked (GlcNAc...) asparagine glycan is linked to N181. 3 residues coordinate Zn(2+): H192, H215, and H224. Intrachain disulfides connect C258-C261 and C290-C303. N-linked (GlcNAc...) asparagine glycosylation is found at N304 and N350. Positions 377 and 381 each coordinate Zn(2+). An N-linked (GlcNAc...) asparagine glycan is attached at N385. Residue H404 participates in Zn(2+) binding. A helical membrane pass occupies residues 478–501; it reads IVTIAVVAALSLVAVIFAGASCLI. The Cytoplasmic segment spans residues 502–537; sequence RARSNMDEANQPLLTDQYQHYIEEYEKIHNPNQSVV.

The protein belongs to the tyrosinase family. As to quaternary structure, monomer. Interacts with ATP7A. Interacts with SLC45A2. It depends on Cu(2+) as a cofactor. Requires Zn(2+) as cofactor. Glycosylated.

It localises to the melanosome membrane. It catalyses the reaction 2 5,6-dihydroxyindole-2-carboxylate + O2 = 2 indole-5,6-quinone-2-carboxylate + 2 H2O. The protein operates within pigment biosynthesis; melanin biosynthesis. Plays a role in melanin biosynthesis. Catalyzes the oxidation of 5,6-dihydroxyindole-2-carboxylic acid (DHICA) into indole-5,6-quinone-2-carboxylic acid. May regulate or influence the type of melanin synthesized. Also to a lower extent, capable of hydroxylating tyrosine and producing melanin. The protein is 5,6-dihydroxyindole-2-carboxylic acid oxidase (TYRP1) of Bos taurus (Bovine).